The following is a 218-amino-acid chain: Ras-related protein RabO (218 aa).

15 to 22 (GDYCVGKT) contributes to the GTP binding site. An Effector region motif is present at residues 37–45 (RNCNIGVDF). GTP contacts are provided by residues 63–67 (DTGGQ) and 122–125 (NKID). Cys215 is modified (cysteine methyl ester). A lipid anchor (S-geranylgeranyl cysteine) is attached at Cys215. A propeptide spans 216–218 (FIL) (removed in mature form).

Belongs to the small GTPase superfamily. Rab family.

The protein localises to the cell membrane. The chain is Ras-related protein RabO (rabO) from Dictyostelium discoideum (Social amoeba).